The following is a 423-amino-acid chain: Adenylosuccinate synthetase (423 aa).

Residues 11–17 (GDEGKGK) and 39–41 (GHT) contribute to the GTP site. Residue Asp12 is the Proton acceptor of the active site. Mg(2+) contacts are provided by Asp12 and Gly39. IMP contacts are provided by residues 12 to 15 (DEGK), 37 to 40 (NAGH), Thr127, Arg141, Gln223, Thr238, and Arg302. Catalysis depends on His40, which acts as the Proton donor. Substrate is bound at residue 298 to 304 (TTTGRSR). Residues Arg304, 330 to 332 (KLD), and 412 to 414 (SVG) each bind GTP.

This sequence belongs to the adenylosuccinate synthetase family. In terms of assembly, homodimer. Mg(2+) is required as a cofactor.

The protein localises to the cytoplasm. The catalysed reaction is IMP + L-aspartate + GTP = N(6)-(1,2-dicarboxyethyl)-AMP + GDP + phosphate + 2 H(+). It functions in the pathway purine metabolism; AMP biosynthesis via de novo pathway; AMP from IMP: step 1/2. Functionally, plays an important role in the de novo pathway of purine nucleotide biosynthesis. Catalyzes the first committed step in the biosynthesis of AMP from IMP. This is Adenylosuccinate synthetase from Methanococcoides burtonii (strain DSM 6242 / NBRC 107633 / OCM 468 / ACE-M).